Here is a 77-residue protein sequence, read N- to C-terminus: Integrin beta-2 (77 aa).

Cysteine 36 and cysteine 43 are disulfide-bonded. An N-linked (GlcNAc...) asparagine glycan is attached at asparagine 54.

The protein belongs to the integrin beta chain family. As to quaternary structure, dimer of an alpha and beta subunit.

It is found in the membrane. In terms of biological role, integrins are a large family of cell surface glycoproteins that mediate cell to cell and cell to matrix adhesion. The sequence is that of Integrin beta-2 (itgb2) from Xenopus laevis (African clawed frog).